Reading from the N-terminus, the 201-residue chain is NADH-quinone oxidoreductase subunit I (201 aa).

4Fe-4S ferredoxin-type domains are found at residues 78 to 107 (MSYE…RIEA) and 116 to 147 (KVVR…MTDI). [4Fe-4S] cluster contacts are provided by C87, C90, C93, C97, C127, C130, C133, and C137.

This sequence belongs to the complex I 23 kDa subunit family. NDH-1 is composed of 14 different subunits. Subunits NuoA, H, J, K, L, M, N constitute the membrane sector of the complex. Requires [4Fe-4S] cluster as cofactor.

Its subcellular location is the cell inner membrane. The catalysed reaction is a quinone + NADH + 5 H(+)(in) = a quinol + NAD(+) + 4 H(+)(out). Functionally, NDH-1 shuttles electrons from NADH, via FMN and iron-sulfur (Fe-S) centers, to quinones in the respiratory chain. The immediate electron acceptor for the enzyme in this species is believed to be ubiquinone. Couples the redox reaction to proton translocation (for every two electrons transferred, four hydrogen ions are translocated across the cytoplasmic membrane), and thus conserves the redox energy in a proton gradient. The protein is NADH-quinone oxidoreductase subunit I of Aquifex aeolicus (strain VF5).